Here is a 604-residue protein sequence, read N- to C-terminus: Aspartate--tRNA(Asp/Asn) ligase (604 aa).

Residue E175 coordinates L-aspartate. Residues 199 to 202 (QMFK) form an aspartate region. L-aspartate contacts are provided by R221 and H451. 221 to 223 (RDE) contacts ATP. E485 serves as a coordination point for ATP. R492 lines the L-aspartate pocket. 537–540 (GIDR) provides a ligand contact to ATP.

It belongs to the class-II aminoacyl-tRNA synthetase family. Type 1 subfamily. In terms of assembly, homodimer.

The protein resides in the cytoplasm. The enzyme catalyses tRNA(Asx) + L-aspartate + ATP = L-aspartyl-tRNA(Asx) + AMP + diphosphate. Its function is as follows. Aspartyl-tRNA synthetase with relaxed tRNA specificity since it is able to aspartylate not only its cognate tRNA(Asp) but also tRNA(Asn). Reaction proceeds in two steps: L-aspartate is first activated by ATP to form Asp-AMP and then transferred to the acceptor end of tRNA(Asp/Asn). In Erythrobacter litoralis (strain HTCC2594), this protein is Aspartate--tRNA(Asp/Asn) ligase.